We begin with the raw amino-acid sequence, 303 residues long: MENLKNELLEAQVGKVLENEPLANHTTMKIGGPADLLIIPKDIDAVKTIMDHVKKHQTNWTVIGRGSNLLVLDKGIRGVVLKLGTGLDHLTVNDEEITVGGGYSVVRLATSLSKQGLSGLEFAAGIPGSIGGAVYMNAGAHGSDISKILVKARILFEDGSIEWLTNEQMNFSYRTSVLQKERPGIVLEAVFKLKQDDREKITKKMQQNKDYRKETQPYNRPCAGSIFRNPLPEYAGQLVEKANLKGYQLGGARISDMHGNFIVNAGGATAQDVLDLIQFIQKKIKEDYNVEMHTEVEIIGEEN.

Positions 30–196 constitute an FAD-binding PCMH-type domain; sequence IGGPADLLII…LEAVFKLKQD (167 aa). Arg174 is an active-site residue. Catalysis depends on Ser225, which acts as the Proton donor. Residue Glu295 is part of the active site.

The protein belongs to the MurB family. FAD is required as a cofactor.

It localises to the cytoplasm. The catalysed reaction is UDP-N-acetyl-alpha-D-muramate + NADP(+) = UDP-N-acetyl-3-O-(1-carboxyvinyl)-alpha-D-glucosamine + NADPH + H(+). It functions in the pathway cell wall biogenesis; peptidoglycan biosynthesis. Functionally, cell wall formation. This chain is UDP-N-acetylenolpyruvoylglucosamine reductase, found in Bacillus pumilus (strain SAFR-032).